The following is a 64-amino-acid chain: Beta-defensin 1 (64 aa).

Residues 1-22 (MRLHHLLLVLFFVVLSAGSGFT) form the signal peptide. 3 disulfide bridges follow: cysteine 31/cysteine 60, cysteine 38/cysteine 53, and cysteine 43/cysteine 61.

The protein belongs to the beta-defensin family. As to quaternary structure, monomer. Homodimer.

The protein resides in the secreted. The protein localises to the membrane. Functionally, has bactericidal activity. May act as a ligand for C-C chemokine receptor CCR6. Positively regulates the sperm motility and bactericidal activity in a CCR6-dependent manner. Binds to CCR6 and triggers Ca2+ mobilization in the sperm which is important for its motility. This is Beta-defensin 1 (DEFB1) from Ovis aries (Sheep).